The chain runs to 119 residues: Acidic phospholipase A2 E (119 aa).

Cystine bridges form between Cys-11–Cys-71, Cys-26–Cys-118, Cys-28–Cys-44, Cys-43–Cys-99, Cys-50–Cys-92, Cys-60–Cys-85, and Cys-78–Cys-90. Tyr-27, Gly-29, and Gly-31 together coordinate Ca(2+). His-47 is an active-site residue. Ca(2+) is bound at residue Asp-48. Residue Asp-93 is part of the active site.

It belongs to the phospholipase A2 family. Group I subfamily. D49 sub-subfamily. Ca(2+) serves as cofactor. Expressed by the venom gland.

The protein resides in the secreted. The catalysed reaction is a 1,2-diacyl-sn-glycero-3-phosphocholine + H2O = a 1-acyl-sn-glycero-3-phosphocholine + a fatty acid + H(+). PLA2 catalyzes the calcium-dependent hydrolysis of the 2-acyl groups in 3-sn-phosphoglycerides. In Naja oxiana (Central Asian cobra), this protein is Acidic phospholipase A2 E.